We begin with the raw amino-acid sequence, 154 residues long: NADPH-dependent 7-cyano-7-deazaguanine reductase (154 aa).

C52 acts as the Thioimide intermediate in catalysis. The active-site Proton donor is D59. Substrate contacts are provided by residues 74–76 (VES) and 93–94 (HE).

The protein belongs to the GTP cyclohydrolase I family. QueF type 1 subfamily.

The protein localises to the cytoplasm. It carries out the reaction 7-aminomethyl-7-carbaguanine + 2 NADP(+) = 7-cyano-7-deazaguanine + 2 NADPH + 3 H(+). The protein operates within tRNA modification; tRNA-queuosine biosynthesis. In terms of biological role, catalyzes the NADPH-dependent reduction of 7-cyano-7-deazaguanine (preQ0) to 7-aminomethyl-7-deazaguanine (preQ1). This Rhizobium rhizogenes (strain K84 / ATCC BAA-868) (Agrobacterium radiobacter) protein is NADPH-dependent 7-cyano-7-deazaguanine reductase.